The chain runs to 322 residues: Secretion system apparatus protein SsaQ (322 aa).

This sequence belongs to the FliN/MopA/SpaO family.

Functionally, part of a type III secretion system. The chain is Secretion system apparatus protein SsaQ (ssaQ) from Salmonella typhimurium (strain LT2 / SGSC1412 / ATCC 700720).